A 565-amino-acid chain; its full sequence is Amino-acid acetyltransferase, mitochondrial (565 aa).

Residues 38–58 (DIATATPAATPSDGAQPPAQN) are disordered. Positions 352–540 (LPVRVLRSME…EFGGGRLVRV (189 aa)) constitute an N-acetyltransferase domain.

The protein belongs to the acetyltransferase family.

The protein resides in the mitochondrion. It carries out the reaction L-glutamate + acetyl-CoA = N-acetyl-L-glutamate + CoA + H(+). It participates in amino-acid biosynthesis; L-arginine biosynthesis; N(2)-acetyl-L-ornithine from L-glutamate: step 1/4. N-acetylglutamate synthase involved in arginine biosynthesis. This chain is Amino-acid acetyltransferase, mitochondrial (ARG2), found in Cryptococcus neoformans var. neoformans serotype D (strain B-3501A) (Filobasidiella neoformans).